We begin with the raw amino-acid sequence, 127 residues long: Protein chibby homolog 1 (127 aa).

Positions 1–10 (MPLFGSTFSP) are enriched in polar residues. The interval 1–26 (MPLFGSTFSPKKTPPRKSASLSNLHN) is disordered. Phosphoserine occurs at positions 9 and 20. A minimal region for the interaction with PKD2 region spans residues 60 to 112 (IAETGISGGVDRREAQRLRRRNQQLEEENNLLRLKVDILLDMLSETTAESHLM). Residues 68 to 125 (GVDRREAQRLRRRNQQLEEENNLLRLKVDILLDMLSETTAESHLMEKELDELKSVSRR) adopt a coiled-coil conformation. Residues 77–98 (LRRRNQQLEEENNLLRLKVDIL) are leucine-zipper; mediates homodimerization.

It belongs to the chibby family. As to quaternary structure, homodimer. Homodimerization is essential for nuclear localization and interaction with KPNA4 but is dispensable for interaction with CTNNB1. Interacts with polycystin-2/PKD2 and GM130. Interacts with the C-terminal region of CTNNB1. Interacts (C-terminus) with TCIM (C-terminus), TCIM competes with CTNNB1 for the interaction with CBY1. Interacts with FAM92A; this interaction facilitates targeting of FAM92A to cilium basal body. Interacts with CIBAR2. Interacts with KPNA4.

Its subcellular location is the nucleus speckle. It is found in the cytoplasm. The protein resides in the cytoskeleton. It localises to the cilium basal body. The protein localises to the microtubule organizing center. Its subcellular location is the centrosome. It is found in the centriole. The protein resides in the golgi apparatus. It localises to the trans-Golgi network. The protein localises to the cell projection. Its subcellular location is the cilium. It is found in the flagellum. The protein resides in the nucleus. Its function is as follows. Inhibits the Wnt/Wingless pathway by binding to CTNNB1/beta-catenin and inhibiting beta-catenin-mediated transcriptional activation through competition with TCF/LEF transcription factors. Has also been shown to play a role in regulating the intracellular trafficking of polycystin-2/PKD2 and possibly of other intracellular proteins. Promotes adipocyte and cardiomyocyte differentiation. The chain is Protein chibby homolog 1 (CBY1) from Bos taurus (Bovine).